We begin with the raw amino-acid sequence, 418 residues long: Serine--tRNA ligase (418 aa).

Residue 226–228 (TSE) coordinates L-serine. ATP-binding positions include 257 to 259 (RRE) and Val-273. Glu-280 is an L-serine binding site. 344–347 (ELTS) serves as a coordination point for ATP. L-serine is bound at residue Thr-379.

Belongs to the class-II aminoacyl-tRNA synthetase family. Type-1 seryl-tRNA synthetase subfamily. In terms of assembly, homodimer. The tRNA molecule binds across the dimer.

It is found in the cytoplasm. It catalyses the reaction tRNA(Ser) + L-serine + ATP = L-seryl-tRNA(Ser) + AMP + diphosphate + H(+). The enzyme catalyses tRNA(Sec) + L-serine + ATP = L-seryl-tRNA(Sec) + AMP + diphosphate + H(+). It participates in aminoacyl-tRNA biosynthesis; selenocysteinyl-tRNA(Sec) biosynthesis; L-seryl-tRNA(Sec) from L-serine and tRNA(Sec): step 1/1. Its function is as follows. Catalyzes the attachment of serine to tRNA(Ser). Is also able to aminoacylate tRNA(Sec) with serine, to form the misacylated tRNA L-seryl-tRNA(Sec), which will be further converted into selenocysteinyl-tRNA(Sec). In Mycobacteroides abscessus (strain ATCC 19977 / DSM 44196 / CCUG 20993 / CIP 104536 / JCM 13569 / NCTC 13031 / TMC 1543 / L948) (Mycobacterium abscessus), this protein is Serine--tRNA ligase.